Consider the following 96-residue polypeptide: Beta-defensin 20 (96 aa).

The N-terminal stretch at 1–21 (MKLPQLLLILLFVVLADSVQP) is a signal peptide. 3 disulfide bridges follow: Cys-24-Cys-52, Cys-32-Cys-46, and Cys-36-Cys-53.

It belongs to the beta-defensin family.

It is found in the secreted. In terms of biological role, has antibacterial activity. The polypeptide is Beta-defensin 20 (Defb20) (Rattus norvegicus (Rat)).